The following is a 380-amino-acid chain: MSKRDFYEVLGVSKGADEREIKKAYKPLAMKFHPDRNQGDAASEEKFKEVKEAYEILTDENLRARYDQYGHAGVDQSQGGGGHGGFGGGADFGDAFGDIFGDIFGGRNGGGRRGPARGSDLRYTMELTLEEAVRGVSKEIKVPSLVHCEVCNGSGAHTGSTAQTCPTCHGAGQVQMRQGFFAVQQACPHCHGRGKIIKDPCRKCHGEGRYQKTKTLSVKIPAGVDTGDRIRLSGEGEAGEAGAPAGDLYVQVHVKEHEIFVRDGNNLYCEVPISFTAAALGGEIEVPTLDGRVKLKVTPETQTGKMFRMRGKGVKSVRSGQVGDLMCKVVIETPVKLTESQKELLRQLDESFSGAAAKTHKPRSEGFFEGVKRFFDDLTR.

The 66-residue stretch at 5–70 folds into the J domain; that stretch reads DFYEVLGVSK…NLRARYDQYG (66 aa). The CR-type zinc finger occupies 135–213; the sequence is GVSKEIKVPS…CHGEGRYQKT (79 aa). Zn(2+)-binding residues include cysteine 148, cysteine 151, cysteine 165, cysteine 168, cysteine 187, cysteine 190, cysteine 201, and cysteine 204. 4 CXXCXGXG motif repeats span residues 148 to 155, 165 to 172, 187 to 194, and 201 to 208; these read CEVCNGSG, CPTCHGAG, CPHCHGRG, and CRKCHGEG.

It belongs to the DnaJ family. In terms of assembly, homodimer. Zn(2+) is required as a cofactor.

It localises to the cytoplasm. Functionally, participates actively in the response to hyperosmotic and heat shock by preventing the aggregation of stress-denatured proteins and by disaggregating proteins, also in an autonomous, DnaK-independent fashion. Unfolded proteins bind initially to DnaJ; upon interaction with the DnaJ-bound protein, DnaK hydrolyzes its bound ATP, resulting in the formation of a stable complex. GrpE releases ADP from DnaK; ATP binding to DnaK triggers the release of the substrate protein, thus completing the reaction cycle. Several rounds of ATP-dependent interactions between DnaJ, DnaK and GrpE are required for fully efficient folding. Also involved, together with DnaK and GrpE, in the DNA replication of plasmids through activation of initiation proteins. In Aeromonas salmonicida (strain A449), this protein is Chaperone protein DnaJ.